We begin with the raw amino-acid sequence, 212 residues long: MIAVINYGAGNLPNVVRALQRVGATLTVTDNPEVIRSAQAVVLPGVGATADTMASLRHLGIAEVLPAVIAASTPFLGICVGMQVLLSESEEFGLHSCLDIIPGTVRRLPEHAGKIPQIGWNQLQISPTFRNHPLFADIPDGADVYFVHSYYCAVADEAIIAARTDYGIPFPSVIIRDHLAAVQFHPEKSGDYGLRLLANFVRWSEAVQPKGV.

Residues 1–210 (MIAVINYGAG…VRWSEAVQPK (210 aa)) enclose the Glutamine amidotransferase type-1 domain. Cys-79 functions as the Nucleophile in the catalytic mechanism. Active-site residues include His-185 and Glu-187.

As to quaternary structure, heterodimer of HisH and HisF.

It localises to the cytoplasm. It carries out the reaction 5-[(5-phospho-1-deoxy-D-ribulos-1-ylimino)methylamino]-1-(5-phospho-beta-D-ribosyl)imidazole-4-carboxamide + L-glutamine = D-erythro-1-(imidazol-4-yl)glycerol 3-phosphate + 5-amino-1-(5-phospho-beta-D-ribosyl)imidazole-4-carboxamide + L-glutamate + H(+). The enzyme catalyses L-glutamine + H2O = L-glutamate + NH4(+). It participates in amino-acid biosynthesis; L-histidine biosynthesis; L-histidine from 5-phospho-alpha-D-ribose 1-diphosphate: step 5/9. Its function is as follows. IGPS catalyzes the conversion of PRFAR and glutamine to IGP, AICAR and glutamate. The HisH subunit catalyzes the hydrolysis of glutamine to glutamate and ammonia as part of the synthesis of IGP and AICAR. The resulting ammonia molecule is channeled to the active site of HisF. In Chloroflexus aurantiacus (strain ATCC 29364 / DSM 637 / Y-400-fl), this protein is Imidazole glycerol phosphate synthase subunit HisH.